Here is a 186-residue protein sequence, read N- to C-terminus: Nucleoside triphosphate pyrophosphatase (186 aa).

Residue D68 is the Proton acceptor of the active site.

This sequence belongs to the Maf family. Requires a divalent metal cation as cofactor.

The protein localises to the cytoplasm. The catalysed reaction is a ribonucleoside 5'-triphosphate + H2O = a ribonucleoside 5'-phosphate + diphosphate + H(+). It carries out the reaction a 2'-deoxyribonucleoside 5'-triphosphate + H2O = a 2'-deoxyribonucleoside 5'-phosphate + diphosphate + H(+). Nucleoside triphosphate pyrophosphatase. May have a dual role in cell division arrest and in preventing the incorporation of modified nucleotides into cellular nucleic acids. This chain is Nucleoside triphosphate pyrophosphatase, found in Prochlorococcus marinus (strain MIT 9303).